The primary structure comprises 906 residues: Valine--tRNA ligase (906 aa).

Positions 43-53 match the 'HIGH' region motif; it reads PNVTGSLHIGH. A 'KMSKS' region motif is present at residues 548–552; that stretch reads KMSKS. Lys551 contacts ATP. The stretch at 842–905 forms a coiled coil; sequence EKARLTKDIA…EAALSRLASV (64 aa).

This sequence belongs to the class-I aminoacyl-tRNA synthetase family. ValS type 1 subfamily. In terms of assembly, monomer.

Its subcellular location is the cytoplasm. It carries out the reaction tRNA(Val) + L-valine + ATP = L-valyl-tRNA(Val) + AMP + diphosphate. In terms of biological role, catalyzes the attachment of valine to tRNA(Val). As ValRS can inadvertently accommodate and process structurally similar amino acids such as threonine, to avoid such errors, it has a 'posttransfer' editing activity that hydrolyzes mischarged Thr-tRNA(Val) in a tRNA-dependent manner. This is Valine--tRNA ligase from Caulobacter vibrioides (strain ATCC 19089 / CIP 103742 / CB 15) (Caulobacter crescentus).